The sequence spans 429 residues: Histidinol dehydrogenase (429 aa).

Tyr127, Gln188, and Asn211 together coordinate NAD(+). Ser234, Gln256, and His259 together coordinate substrate. Zn(2+) contacts are provided by Gln256 and His259. Residues Glu324 and His325 each act as proton acceptor in the active site. His325, Asp358, Glu412, and His417 together coordinate substrate. Zn(2+) is bound at residue Asp358. His417 is a binding site for Zn(2+).

It belongs to the histidinol dehydrogenase family. The cofactor is Zn(2+).

The catalysed reaction is L-histidinol + 2 NAD(+) + H2O = L-histidine + 2 NADH + 3 H(+). Its pathway is amino-acid biosynthesis; L-histidine biosynthesis; L-histidine from 5-phospho-alpha-D-ribose 1-diphosphate: step 9/9. In terms of biological role, catalyzes the sequential NAD-dependent oxidations of L-histidinol to L-histidinaldehyde and then to L-histidine. The polypeptide is Histidinol dehydrogenase (Bacillus cereus (strain ATCC 14579 / DSM 31 / CCUG 7414 / JCM 2152 / NBRC 15305 / NCIMB 9373 / NCTC 2599 / NRRL B-3711)).